The primary structure comprises 465 residues: Respiratory transcription factor ZNF1 (465 aa).

Residues C8 to C34 constitute a DNA-binding region (zn(2)-C6 fungal-type).

This sequence belongs to the MAL13 family.

The protein localises to the nucleus. Transcription factor that regulates respiratory growth and plays a critical role in stress adaptation during non-fermentative growth. Binds to promoters of genes involved in non-fermentative metabolism, including processes such as gluconeogenesis (PCK1, FBP1 and MDH2), glyoxylate shunt (MLS1 and ICL1) and the tricarboxylic acid cycle (ACO1). Plays a role in maintaining mitochondrial morphology and function. Also plays a role in tolerance to pH and osmotic stress, especially during the oxidative metabolism. The polypeptide is Respiratory transcription factor ZNF1 (Saccharomyces cerevisiae (strain ATCC 204508 / S288c) (Baker's yeast)).